Here is a 344-residue protein sequence, read N- to C-terminus: Nicotinate-nucleotide--dimethylbenzimidazole phosphoribosyltransferase (344 aa).

Residue glutamate 310 is the Proton acceptor of the active site.

Belongs to the CobT family.

The enzyme catalyses 5,6-dimethylbenzimidazole + nicotinate beta-D-ribonucleotide = alpha-ribazole 5'-phosphate + nicotinate + H(+). It participates in nucleoside biosynthesis; alpha-ribazole biosynthesis; alpha-ribazole from 5,6-dimethylbenzimidazole: step 1/2. Functionally, catalyzes the synthesis of alpha-ribazole-5'-phosphate from nicotinate mononucleotide (NAMN) and 5,6-dimethylbenzimidazole (DMB). The polypeptide is Nicotinate-nucleotide--dimethylbenzimidazole phosphoribosyltransferase (Shewanella amazonensis (strain ATCC BAA-1098 / SB2B)).